The following is a 100-amino-acid chain: Small ribosomal subunit protein uS14c (100 aa).

This sequence belongs to the universal ribosomal protein uS14 family. In terms of assembly, part of the 30S ribosomal subunit.

The protein localises to the plastid. The protein resides in the chloroplast. Binds 16S rRNA, required for the assembly of 30S particles. The protein is Small ribosomal subunit protein uS14c of Buxus microphylla (Littleleaf boxwood).